A 710-amino-acid polypeptide reads, in one-letter code: MLSFQYPDVYRDETAIQDYHGHKVCDPYAWLEDPDSEQTKAFVEAQNKITVPFLEQCPIRGLYKERMTELYDYPKYSCHFKKGKRYFYFYNTGLQNQRVLYVQDSLEGEARVFLDPNILSDDGTVALRGYAFSEDGEYFAYGLSASGSDWVTIKFMKVDGAKELPDVLERVKFSCMAWTHDGKGMFYNAYPQQDGKSDGTETSTNLHQKLYYHVLGTDQSEDILCAEFPDEPKWMGGAELSDDGRYVLLSIREGCDPVNRLWYCDLQQESNGITGILKWVKLIDNFEGEYDYVTNEGTVFTFKTNRHSPNYRLINIDFTDPEESKWKVLVPEHEKDVLEWVACVRSNFLVLCYLHDVKNTLQLHDLATGALLKIFPLEVGSVVGYSGQKKDTEIFYQFTSFLSPGIIYHCDLTKEELEPRVFREVTVKGIDASDYQTVQIFYPSKDGTKIPMFIVHKKGIKLDGSHPAFLYGYGGFNISITPNYSVSRLIFVRHMGGVLAVANIRGGGEYGETWHKGGILANKQNCFDDFQCAAEYLIKEGYTSPKRLTINGGSNGGLLVATCANQRPDLFGCVIAQVGVMDMLKFHKYTIGHAWTTDYGCSDSKQHFEWLIKYSPLHNVKLPEADDIQYPSMLLLTADHDDRVVPLHSLKFIATLQYIVGRSRKQNNPLLIHVDTKAGHGAGKPTAKVIEEVSDMFAFIARCLNIDWIP.

Met1 bears the N-acetylmethionine mark. Lys157 is subject to N6-acetyllysine. Catalysis depends on charge relay system residues Ser554, Asp641, and His680.

The protein belongs to the peptidase S9A family. The N-terminus is blocked. As to expression, ubiquitous.

It is found in the cytoplasm. The enzyme catalyses Hydrolysis of Pro-|-Xaa &gt;&gt; Ala-|-Xaa in oligopeptides.. Cleaves peptide bonds on the C-terminal side of prolyl residues within peptides that are up to approximately 30 amino acids long. In Sus scrofa (Pig), this protein is Prolyl endopeptidase (PREP).